A 442-amino-acid chain; its full sequence is Myb family transcription factor PHL13 (442 aa).

An HTH myb-type domain is found at 235–295; it reads MTSKQRMRWT…HLQKYRTARY (61 aa). Residues 266-291 constitute a DNA-binding region (H-T-H motif); the sequence is PKAVLKLINSPGLTVYHVKSHLQKYR. The coiled coil stretch occupies residues 329–349; the sequence is TEALRLQMKVQKQLHEQLEIQ. Residues 342 to 347 carry the LHEQLE motif; that stretch reads LHEQLE. A compositionally biased stretch (basic and acidic residues) spans 370–380; it reads QQKMQENKKDS. Residues 370–442 are disordered; it reads QQKMQENKKD…TSNRKRVRED (73 aa). The segment covering 395 to 434 has biased composition (polar residues); that stretch reads SPNLSQPFLHKATNSEPSITQKLQNGSSTMDQSESTSGTS.

The protein belongs to the MYB-CC family.

Its subcellular location is the nucleus. The sequence is that of Myb family transcription factor PHL13 from Arabidopsis thaliana (Mouse-ear cress).